We begin with the raw amino-acid sequence, 256 residues long: POU domain class 2-associating factor 1 (256 aa).

The interval Met1–Arg23 is disordered. The OCA domain occupies Pro16–His38.

It belongs to the POU2AF family. Interacts with POU2F1/OCT1 and POU2F2/OCT2; the interaction increases POU2F1 and POU2F2 transactivation activity. Post-translationally, ubiquitinated; mediated by SIAH1 or SIAH2 and leading to its subsequent proteasomal degradation.

The protein resides in the nucleus. Its function is as follows. Transcriptional coactivator that specifically associates with either POU2F1/OCT1 or POU2F2/OCT2. It boosts the POU2F1/OCT1 mediated promoter activity and to a lesser extent, that of POU2F2/OCT2. It recognizes the POU domains of POU2F1/OCT1 and POU2F2/OCT2. It is essential for the response of B-cells to antigens and required for the formation of germinal centers. Regulates IL6 expression in B cells as POU2F2/OCT2 coactivator. The sequence is that of POU domain class 2-associating factor 1 (POU2AF1) from Bos taurus (Bovine).